We begin with the raw amino-acid sequence, 191 residues long: Large ribosomal subunit protein uL6B (191 aa).

Belongs to the universal ribosomal protein uL6 family. In terms of assembly, component of the large ribosomal subunit (LSU). Mature yeast ribosomes consist of a small (40S) and a large (60S) subunit. The 40S small subunit contains 1 molecule of ribosomal RNA (18S rRNA) and 33 different proteins (encoded by 57 genes). The large 60S subunit contains 3 rRNA molecules (25S, 5.8S and 5S rRNA) and 46 different proteins (encoded by 81 genes).

Its subcellular location is the cytoplasm. Functionally, component of the ribosome, a large ribonucleoprotein complex responsible for the synthesis of proteins in the cell. The small ribosomal subunit (SSU) binds messenger RNAs (mRNAs) and translates the encoded message by selecting cognate aminoacyl-transfer RNA (tRNA) molecules. The large subunit (LSU) contains the ribosomal catalytic site termed the peptidyl transferase center (PTC), which catalyzes the formation of peptide bonds, thereby polymerizing the amino acids delivered by tRNAs into a polypeptide chain. The nascent polypeptides leave the ribosome through a tunnel in the LSU and interact with protein factors that function in enzymatic processing, targeting, and the membrane insertion of nascent chains at the exit of the ribosomal tunnel. This Saccharomyces cerevisiae (strain ATCC 204508 / S288c) (Baker's yeast) protein is Large ribosomal subunit protein uL6B.